A 146-amino-acid chain; its full sequence is Ribosomal RNA large subunit methyltransferase H (146 aa).

S-adenosyl-L-methionine is bound by residues Leu60, Gly93, and 112–117 (MGKMTL).

It belongs to the RNA methyltransferase RlmH family. Homodimer.

The protein resides in the cytoplasm. The enzyme catalyses pseudouridine(1915) in 23S rRNA + S-adenosyl-L-methionine = N(3)-methylpseudouridine(1915) in 23S rRNA + S-adenosyl-L-homocysteine + H(+). Its function is as follows. Specifically methylates the pseudouridine at position 1915 (m3Psi1915) in 23S rRNA. This is Ribosomal RNA large subunit methyltransferase H from Koribacter versatilis (strain Ellin345).